Consider the following 681-residue polypeptide: DNA-directed RNA polymerase subunit beta' (681 aa).

Zn(2+) contacts are provided by C69, C71, C87, and C90. Residues D489, D491, and D493 each coordinate Mg(2+).

The protein belongs to the RNA polymerase beta' chain family. RpoC1 subfamily. In terms of assembly, in plastids the minimal PEP RNA polymerase catalytic core is composed of four subunits: alpha, beta, beta', and beta''. When a (nuclear-encoded) sigma factor is associated with the core the holoenzyme is formed, which can initiate transcription. Mg(2+) serves as cofactor. The cofactor is Zn(2+).

The protein localises to the plastid. It is found in the chloroplast. It catalyses the reaction RNA(n) + a ribonucleoside 5'-triphosphate = RNA(n+1) + diphosphate. Its function is as follows. DNA-dependent RNA polymerase catalyzes the transcription of DNA into RNA using the four ribonucleoside triphosphates as substrates. The sequence is that of DNA-directed RNA polymerase subunit beta' from Nicotiana sylvestris (Wood tobacco).